The primary structure comprises 159 residues: Cyclic pyranopterin monophosphate synthase (159 aa).

Substrate is bound by residues 76 to 78 and 114 to 115; these read MCH and ME. Asp129 is a catalytic residue.

Belongs to the MoaC family. Homohexamer; trimer of dimers.

It catalyses the reaction (8S)-3',8-cyclo-7,8-dihydroguanosine 5'-triphosphate = cyclic pyranopterin phosphate + diphosphate. Its pathway is cofactor biosynthesis; molybdopterin biosynthesis. In terms of biological role, catalyzes the conversion of (8S)-3',8-cyclo-7,8-dihydroguanosine 5'-triphosphate to cyclic pyranopterin monophosphate (cPMP). In Natranaerobius thermophilus (strain ATCC BAA-1301 / DSM 18059 / JW/NM-WN-LF), this protein is Cyclic pyranopterin monophosphate synthase.